The primary structure comprises 360 residues: Histidinol-phosphate aminotransferase (360 aa).

Lys-211 bears the N6-(pyridoxal phosphate)lysine mark.

This sequence belongs to the class-II pyridoxal-phosphate-dependent aminotransferase family. Histidinol-phosphate aminotransferase subfamily. As to quaternary structure, homodimer. Pyridoxal 5'-phosphate serves as cofactor.

It catalyses the reaction L-histidinol phosphate + 2-oxoglutarate = 3-(imidazol-4-yl)-2-oxopropyl phosphate + L-glutamate. It functions in the pathway amino-acid biosynthesis; L-histidine biosynthesis; L-histidine from 5-phospho-alpha-D-ribose 1-diphosphate: step 7/9. The chain is Histidinol-phosphate aminotransferase from Sodalis glossinidius (strain morsitans).